A 552-amino-acid polypeptide reads, in one-letter code: Probable acyl-activating enzyme 5, peroxisomal (552 aa).

Residues serine 550 to methionine 552 carry the Microbody targeting signal motif.

It belongs to the ATP-dependent AMP-binding enzyme family. In terms of tissue distribution, expressed in roots, stems and developing seeds.

It localises to the peroxisome. May act as an acid--thiol ligase that activates carboxylic acids by forming acyl-CoAs. This chain is Probable acyl-activating enzyme 5, peroxisomal (AAE5), found in Arabidopsis thaliana (Mouse-ear cress).